Here is a 436-residue protein sequence, read N- to C-terminus: Serine carboxypeptidase-like 15 (436 aa).

The first 24 residues, 1–24, serve as a signal peptide directing secretion; the sequence is MASWIFKLLLLLQCVLVLIQHADS. 3 cysteine pairs are disulfide-bonded: C83–C326, C247–C261, and C285–C292. N104 carries N-linked (GlcNAc...) asparagine glycosylation. The active site involves S179. N-linked (GlcNAc...) asparagine glycosylation is found at N306 and N345. Residue D361 is part of the active site. A glycan (N-linked (GlcNAc...) asparagine) is linked at N377. H414 is an active-site residue.

It belongs to the peptidase S10 family. In terms of tissue distribution, expressed in seedlings and roots.

The protein localises to the secreted. Probable carboxypeptidase. The protein is Serine carboxypeptidase-like 15 (SCPL15) of Arabidopsis thaliana (Mouse-ear cress).